The chain runs to 173 residues: Crossover junction endodeoxyribonuclease RuvC (173 aa).

Catalysis depends on residues Asp8, Glu67, and Asp139. 3 residues coordinate Mg(2+): Asp8, Glu67, and Asp139.

The protein belongs to the RuvC family. In terms of assembly, homodimer which binds Holliday junction (HJ) DNA. The HJ becomes 2-fold symmetrical on binding to RuvC with unstacked arms; it has a different conformation from HJ DNA in complex with RuvA. In the full resolvosome a probable DNA-RuvA(4)-RuvB(12)-RuvC(2) complex forms which resolves the HJ. It depends on Mg(2+) as a cofactor.

Its subcellular location is the cytoplasm. It catalyses the reaction Endonucleolytic cleavage at a junction such as a reciprocal single-stranded crossover between two homologous DNA duplexes (Holliday junction).. The RuvA-RuvB-RuvC complex processes Holliday junction (HJ) DNA during genetic recombination and DNA repair. Endonuclease that resolves HJ intermediates. Cleaves cruciform DNA by making single-stranded nicks across the HJ at symmetrical positions within the homologous arms, yielding a 5'-phosphate and a 3'-hydroxyl group; requires a central core of homology in the junction. The consensus cleavage sequence is 5'-(A/T)TT(C/G)-3'. Cleavage occurs on the 3'-side of the TT dinucleotide at the point of strand exchange. HJ branch migration catalyzed by RuvA-RuvB allows RuvC to scan DNA until it finds its consensus sequence, where it cleaves and resolves the cruciform DNA. The protein is Crossover junction endodeoxyribonuclease RuvC of Pseudoalteromonas atlantica (strain T6c / ATCC BAA-1087).